The primary structure comprises 275 residues: Shikimate dehydrogenase (NADP(+)) (275 aa).

Residues 19–21 and Thr66 each bind shikimate; that span reads SIS. Lys70 acts as the Proton acceptor in catalysis. Glu82 is an NADP(+) binding site. Residues Asn91 and Asp106 each contribute to the shikimate site. Residues 129–133, 153–158, and Ile219 contribute to the NADP(+) site; these read GAGGA and NRTYER. Tyr221 is a shikimate binding site. Residue Gly242 participates in NADP(+) binding.

This sequence belongs to the shikimate dehydrogenase family. As to quaternary structure, homodimer.

It catalyses the reaction shikimate + NADP(+) = 3-dehydroshikimate + NADPH + H(+). It functions in the pathway metabolic intermediate biosynthesis; chorismate biosynthesis; chorismate from D-erythrose 4-phosphate and phosphoenolpyruvate: step 4/7. Involved in the biosynthesis of the chorismate, which leads to the biosynthesis of aromatic amino acids. Catalyzes the reversible NADPH linked reduction of 3-dehydroshikimate (DHSA) to yield shikimate (SA). The protein is Shikimate dehydrogenase (NADP(+)) of Dictyoglomus turgidum (strain DSM 6724 / Z-1310).